The sequence spans 396 residues: Cathepsin E (396 aa).

Positions 1-19 are cleaved as a signal peptide; it reads MKTLPLLLLLLLDLGQAQG. Residues 20-53 constitute a propeptide, activation peptide; sequence TLDRVPLRRQPSLRKKLRAQGQLSEFWKAHKVDM. Residues 78–392 form the Peptidase A1 domain; sequence YFGTISIGSP…DRGSNRVGLA (315 aa). Asparagine 90 carries an N-linked (GlcNAc...) asparagine glycan. The active site involves aspartate 96. Intrachain disulfides connect cysteine 109–cysteine 114 and cysteine 272–cysteine 276. Residue aspartate 281 is part of the active site. Cysteine 314 and cysteine 351 form a disulfide bridge.

Belongs to the peptidase A1 family. Homodimer; disulfide-linked. In terms of processing, glycosylated. The nature of the carbohydrate chain varies between cell types.

It localises to the endosome. It carries out the reaction Similar to cathepsin D, but slightly broader specificity.. May have a role in immune function. Probably involved in the processing of antigenic peptides during MHC class II-mediated antigen presentation. May play a role in activation-induced lymphocyte depletion in the thymus, and in neuronal degeneration and glial cell activation in the brain. This chain is Cathepsin E (CTSE), found in Oryctolagus cuniculus (Rabbit).